A 356-amino-acid polypeptide reads, in one-letter code: GTPase Obg (356 aa).

The 159-residue stretch at 2–160 (ESFVDEVAIE…KFLRLSLKLL (159 aa)) folds into the Obg domain. The OBG-type G domain maps to 161–329 (ADVGIVGLPN…LLENMDEVFF (169 aa)). Residues 167 to 174 (GLPNAGKS), 192 to 196 (FTTLS), 215 to 218 (DIPG), 282 to 285 (NKID), and 310 to 312 (SAD) each bind GTP. Positions 174 and 194 each coordinate Mg(2+).

This sequence belongs to the TRAFAC class OBG-HflX-like GTPase superfamily. OBG GTPase family. As to quaternary structure, monomer. Requires Mg(2+) as cofactor.

The protein localises to the cytoplasm. An essential GTPase which binds GTP, GDP and possibly (p)ppGpp with moderate affinity, with high nucleotide exchange rates and a fairly low GTP hydrolysis rate. Plays a role in control of the cell cycle, stress response, ribosome biogenesis and in those bacteria that undergo differentiation, in morphogenesis control. The chain is GTPase Obg from Leptospira interrogans serogroup Icterohaemorrhagiae serovar copenhageni (strain Fiocruz L1-130).